Consider the following 219-residue polypeptide: 7-cyano-7-deazaguanine synthase (219 aa).

ATP is bound at residue 10-20 (FSGGQDSTTCL). Residues C188, C197, C200, and C203 each contribute to the Zn(2+) site.

The protein belongs to the QueC family. As to quaternary structure, homodimer. Zn(2+) serves as cofactor.

The enzyme catalyses 7-carboxy-7-deazaguanine + NH4(+) + ATP = 7-cyano-7-deazaguanine + ADP + phosphate + H2O + H(+). It functions in the pathway purine metabolism; 7-cyano-7-deazaguanine biosynthesis. Functionally, catalyzes the ATP-dependent conversion of 7-carboxy-7-deazaguanine (CDG) to 7-cyano-7-deazaguanine (preQ(0)). This chain is 7-cyano-7-deazaguanine synthase, found in Clostridium botulinum (strain Langeland / NCTC 10281 / Type F).